The sequence spans 191 residues: MGRYAIEPENPAKSCKARGEDLRVHFKNTRETAQAIKGMHLKKALRYLNDVIEKKQIIPFRRFSGGVGRKAQAKNFKTPGSQGRWPKKSAQFLIQLLRNAESNAEVKMLNTDALVIDHIQVNRAAHLRRRTYRAHGRINPYMTSPCHIEMFLVEKDEAVPKGEDDTAQKKKVSQKKLKKQKLKAALSGGAD.

A compositionally biased stretch (basic and acidic residues) spans 159–168 (VPKGEDDTAQ). The disordered stretch occupies residues 159 to 191 (VPKGEDDTAQKKKVSQKKLKKQKLKAALSGGAD). Basic residues predominate over residues 169-182 (KKKVSQKKLKKQKL).

Belongs to the universal ribosomal protein uL22 family.

This chain is Large ribosomal subunit protein uL22 (RPL17), found in Suberites domuncula (Sponge).